The following is a 767-amino-acid chain: MSHAVTIQEPQAQPQVSQTRYRERSRAGSHISSNRAYDFLYDPLFIVSSEKDHTQANIQATLIRSRLRKVPRFKTMFSNLIHYPRYSLYWSKSDPVPPFISRQWKGHEEKHREALRQLAITDTSFQMPREVYEDPEVTGKNRYKYFERPFLPFFQQMPFNVVYAISKAEPYTFPPTSTKQLSIPSKLTVGTQTDYRDADVQTDPYSPEYVVCQDSIPELLTLATLTWGRGLPAGQAEVEMIERAREKRAWEATLPALSDTSQFEKRRKMMNEMERKEWAFREQEIEKLQEIRLEVLKELLRKREENQNEVNMKHLNARWSKLQEAKEAKMATIQRTHVSTIRKLVGKGKNIEGKLERRNITKDYSDYASQVYGPLSRLGCFPDNNSEDFVVKNYYLNTYEGLVELESRLPDFVTQPRIRAPKPKVITTKAGFLKRAARLDYELAEVHKALLDKKNKVLEARKPPRFLQRNPIPQPRLPTPTLEMTSNEEEEIEMAVIYLQKLLRGRVIQNMMFEGKEKRLELIQELRTCHALQEDEKLVKKAEKQVTLALQRQRNLHEHKVSLVENHLAGLEGRALADMFDFLSKELVRLQEERRIHAFVMLAERQRRIREAEESGRRQVEKQRLREEDEIFKEVVKVHHSTISSYLEDIILNTEANTAEEQARAEIEKMAEKINDIAYEMESRRTYLQSEEIVAELVYSFLIPEVQKYFVKEKVRNAQRKHILAAHQIIHSCTESMVQKRLTEGQQDEASNAAMLLEKEIQNENNS.

The interval 1-29 is disordered; the sequence is MSHAVTIQEPQAQPQVSQTRYRERSRAGS. Positions 8-19 are enriched in polar residues; it reads QEPQAQPQVSQT.

This sequence belongs to the CFAP91 family. As to quaternary structure, part of a complex containing MYCBP, AKAP1 and PRKAR2B. Interacts with MYCBP and AKAP1. Interacts with CFAP61. Post-translationally, phosphorylated by PKA.

It is found in the cytoplasm. Its subcellular location is the mitochondrion. The protein localises to the cytoskeleton. The protein resides in the cilium axoneme. Involved in sperm flagellum axonemal organization and function. May regulate cilium motility through its role in the assembly of the axonemal radial spokes. In Macaca fascicularis (Crab-eating macaque), this protein is Cilia- and flagella-associated protein 91 (CFAP91).